The primary structure comprises 334 residues: Adenosine deaminase (334 aa).

Residues histidine 12 and histidine 14 each contribute to the Zn(2+) site. The substrate site is built by histidine 14, aspartate 16, and glycine 170. Residue histidine 197 coordinates Zn(2+). Glutamate 200 functions as the Proton donor in the catalytic mechanism. Aspartate 278 serves as a coordination point for Zn(2+). A substrate-binding site is contributed by aspartate 279.

This sequence belongs to the metallo-dependent hydrolases superfamily. Adenosine and AMP deaminases family. Adenosine deaminase subfamily. Zn(2+) is required as a cofactor.

It catalyses the reaction adenosine + H2O + H(+) = inosine + NH4(+). The catalysed reaction is 2'-deoxyadenosine + H2O + H(+) = 2'-deoxyinosine + NH4(+). Catalyzes the hydrolytic deamination of adenosine and 2-deoxyadenosine. The sequence is that of Adenosine deaminase from Vibrio cholerae serotype O1 (strain ATCC 39541 / Classical Ogawa 395 / O395).